Reading from the N-terminus, the 70-residue chain is Putative membrane protein insertion efficiency factor (70 aa).

This sequence belongs to the UPF0161 family.

The protein resides in the cell membrane. Its function is as follows. Could be involved in insertion of integral membrane proteins into the membrane. This Clostridium novyi (strain NT) protein is Putative membrane protein insertion efficiency factor.